We begin with the raw amino-acid sequence, 886 residues long: Alanine--tRNA ligase (886 aa).

Zn(2+) contacts are provided by His-564, His-568, Cys-676, and His-680.

Belongs to the class-II aminoacyl-tRNA synthetase family. The cofactor is Zn(2+).

Its subcellular location is the cytoplasm. The catalysed reaction is tRNA(Ala) + L-alanine + ATP = L-alanyl-tRNA(Ala) + AMP + diphosphate. In terms of biological role, catalyzes the attachment of alanine to tRNA(Ala) in a two-step reaction: alanine is first activated by ATP to form Ala-AMP and then transferred to the acceptor end of tRNA(Ala). Also edits incorrectly charged Ser-tRNA(Ala) and Gly-tRNA(Ala) via its editing domain. This chain is Alanine--tRNA ligase, found in Methylobacterium sp. (strain 4-46).